We begin with the raw amino-acid sequence, 322 residues long: Ribosome biogenesis protein RLP7 (322 aa).

Positions 1-16 are enriched in polar residues; it reads MSSTQDSKAQTLNSNP. Residues 1–52 are disordered; sequence MSSTQDSKAQTLNSNPEILLRKRRNADRTRIERQELAKKKREEQIKKKRSNK. Serine 2 is modified (N-acetylserine). Phosphoserine is present on serine 14. A compositionally biased stretch (basic and acidic residues) spans 26-45; it reads ADRTRIERQELAKKKREEQI. Threonine 120 is modified (phosphothreonine). The residue at position 278 (serine 278) is a Phosphoserine.

It belongs to the universal ribosomal protein uL30 family.

The protein localises to the nucleus. It is found in the nucleolus. Its function is as follows. Involved in the biogenesis of the 60S ribosomal subunit. May act as a specificity factor that binds precursor rRNAs and tethers the enzymes that carry out the early 5' to 3' exonucleolytic reactions that generate the mature rRNAs. The polypeptide is Ribosome biogenesis protein RLP7 (RLP7) (Saccharomyces cerevisiae (strain ATCC 204508 / S288c) (Baker's yeast)).